The following is a 464-amino-acid chain: Asparagine--tRNA ligase (464 aa).

Belongs to the class-II aminoacyl-tRNA synthetase family. Homodimer.

The protein localises to the cytoplasm. It catalyses the reaction tRNA(Asn) + L-asparagine + ATP = L-asparaginyl-tRNA(Asn) + AMP + diphosphate + H(+). The chain is Asparagine--tRNA ligase from Acetivibrio thermocellus (strain ATCC 27405 / DSM 1237 / JCM 9322 / NBRC 103400 / NCIMB 10682 / NRRL B-4536 / VPI 7372) (Clostridium thermocellum).